A 94-amino-acid polypeptide reads, in one-letter code: PTS system galactitol-specific EIIB component (94 aa).

The PTS EIIB type-2 domain occupies methionine 1–glycine 94. The active-site Phosphocysteine intermediate; for EIIB activity is cysteine 9. Cysteine 9 carries the post-translational modification Phosphocysteine; by EIIA.

As to quaternary structure, forms a complex with one each of subunit of GatA, GatB and 2 subunits of GatC.

It is found in the cytoplasm. The enzyme catalyses galactitol(out) + N(pros)-phospho-L-histidyl-[protein] = galactitol 1-phosphate(in) + L-histidyl-[protein]. Its function is as follows. The phosphoenolpyruvate-dependent sugar phosphotransferase system (PTS), a major carbohydrate active transport system, catalyzes the phosphorylation of incoming sugar substrates concomitant with their translocation across the cell membrane. The enzyme II complex composed of GatA, GatB and GatC is involved in galactitol transport. The chain is PTS system galactitol-specific EIIB component (gatB) from Escherichia coli O157:H7.